The following is a 137-amino-acid chain: Transcription antitermination protein NusB (137 aa).

The protein belongs to the NusB family.

In terms of biological role, involved in transcription antitermination. Required for transcription of ribosomal RNA (rRNA) genes. Binds specifically to the boxA antiterminator sequence of the ribosomal RNA (rrn) operons. The sequence is that of Transcription antitermination protein NusB from Aeromonas hydrophila subsp. hydrophila (strain ATCC 7966 / DSM 30187 / BCRC 13018 / CCUG 14551 / JCM 1027 / KCTC 2358 / NCIMB 9240 / NCTC 8049).